The primary structure comprises 468 residues: Zinc finger protein 672 (468 aa).

4 consecutive C2H2-type zinc fingers follow at residues 15–37, 43–65, 71–93, and 100–123; these read YSCS…ERAH, FRCL…RWTH, YICS…LGTH, and CPCR…VRQH. The segment at 129–151 adopts a C2H2-type 5; degenerate zinc-finger fold; the sequence is HRCPLCARSFRQSALPFHLARAH. 9 consecutive C2H2-type zinc fingers follow at residues 167-189, 202-224, 230-252, 258-280, 286-308, 314-336, 342-364, 370-392, and 398-420; these read YHCT…SRIH, HRCG…LQRH, FKCP…QRTH, YACN…QRSH, HICA…QRSH, FPCP…LRTH, YHCE…LRNH, HKCP…RKTH, and AECT…QRSH.

It belongs to the krueppel C2H2-type zinc-finger protein family.

It localises to the nucleus. In terms of biological role, may be involved in transcriptional regulation. The chain is Zinc finger protein 672 (Znf672) from Rattus norvegicus (Rat).